Consider the following 463-residue polypeptide: Cytoplasmic 60S subunit biogenesis factor SPCC550.15c (463 aa).

2 consecutive C2H2-type zinc fingers follow at residues 5 to 30 (FACT…DWHH) and 70 to 94 (QNCE…SKKH). The interval 109–136 (KLQSEDASSIASSTLSMGEPVVDSEIEE) is disordered. Over residues 113 to 124 (EDASSIASSTLS) the composition is skewed to polar residues. 2 positions are modified to phosphoserine: serine 150 and serine 155. The tract at residues 155–189 (SLHGRESEPSKTELATSIPQSNEASKSHLFTQEPT) is disordered. A compositionally biased stretch (polar residues) spans 167-188 (ELATSIPQSNEASKSHLFTQEP). 2 C2H2-type zinc fingers span residues 208–231 (RDCL…KASH) and 259–283 (FTCL…QKGH). A compositionally biased stretch (acidic residues) spans 317–338 (TVVEEDGSSGEGDWEDVSDDSD). 2 disordered regions span residues 317-341 (TVVE…DNSS) and 444-463 (ANKM…ALLQ).

Belongs to the REI1 family. Associates with nascent pre-60S particles that have not yet entered the translating pool, and is released from mature 60S subunits.

It localises to the cytoplasm. Pre-60S-associated factor involved in the cytoplasmic maturation of the 60S subunit. Involved in the dissociation and recycling of other late pre-60S factors before newly synthesized large ribosomal subunits enter translation. The sequence is that of Cytoplasmic 60S subunit biogenesis factor SPCC550.15c from Schizosaccharomyces pombe (strain 972 / ATCC 24843) (Fission yeast).